A 249-amino-acid chain; its full sequence is Exosome complex component Rrp41 (249 aa).

It belongs to the RNase PH family. Rrp41 subfamily. As to quaternary structure, component of the archaeal exosome complex. Forms a hexameric ring-like arrangement composed of 3 Rrp41-Rrp42 heterodimers. The hexameric ring associates with a trimer of Rrp4 and/or Csl4 subunits.

The protein localises to the cytoplasm. Its function is as follows. Catalytic component of the exosome, which is a complex involved in RNA degradation. Has 3'-&gt;5' exoribonuclease activity. Can also synthesize heteromeric RNA-tails. The polypeptide is Exosome complex component Rrp41 (Thermococcus gammatolerans (strain DSM 15229 / JCM 11827 / EJ3)).